Here is a 150-residue protein sequence, read N- to C-terminus: MGRFISISFGLLVVFLSLSGTGAKQDCLSDWSFYEGYCYKVFNEKKTWEDAEKFCNEQVNGGYLVSFRSSEEMDFVIRMTFPIFRFDFFWIGLRDFWRDCYWRWSDGVNLDYKAWSREPNCFVSKTTDNQWLRWNCNDPRYFVCKSRVSC.

Positions Met1–Ala23 are cleaved as a signal peptide. 3 disulfide bridges follow: Cys27/Cys38, Cys55/Cys144, and Cys121/Cys136. Residues Tyr34–Lys145 form the C-type lectin domain.

The protein belongs to the snaclec family. As to quaternary structure, heterodimer; disulfide-linked.

The protein localises to the secreted. Functionally, interferes with one step of hemostasis (modulation of platelet aggregation, or coagulation cascade, for example). This is Snaclec 7 from Daboia siamensis (Eastern Russel's viper).